A 143-amino-acid chain; its full sequence is 6,7-dimethyl-8-ribityllumazine synthase (143 aa).

5-amino-6-(D-ribitylamino)uracil-binding positions include Trp-10, 44-46, and 68-70; these read SFE and CVI. 73–74 provides a ligand contact to (2S)-2-hydroxy-3-oxobutyl phosphate; sequence DT. Residue His-76 is the Proton donor of the active site. Residue Tyr-101 coordinates 5-amino-6-(D-ribitylamino)uracil. (2S)-2-hydroxy-3-oxobutyl phosphate is bound at residue Arg-115.

The protein belongs to the DMRL synthase family.

The enzyme catalyses (2S)-2-hydroxy-3-oxobutyl phosphate + 5-amino-6-(D-ribitylamino)uracil = 6,7-dimethyl-8-(1-D-ribityl)lumazine + phosphate + 2 H2O + H(+). It participates in cofactor biosynthesis; riboflavin biosynthesis; riboflavin from 2-hydroxy-3-oxobutyl phosphate and 5-amino-6-(D-ribitylamino)uracil: step 1/2. Catalyzes the formation of 6,7-dimethyl-8-ribityllumazine by condensation of 5-amino-6-(D-ribitylamino)uracil with 3,4-dihydroxy-2-butanone 4-phosphate. This is the penultimate step in the biosynthesis of riboflavin. The protein is 6,7-dimethyl-8-ribityllumazine synthase of Bacteroides fragilis (strain YCH46).